An 88-amino-acid polypeptide reads, in one-letter code: Sec-independent protein translocase protein TatA (88 aa).

A helical membrane pass occupies residues M1–G21. The tract at residues K41–G88 is disordered. The span at D46–K56 shows a compositional bias: polar residues. Residues K76–G88 show a composition bias toward basic and acidic residues.

It belongs to the TatA/E family. As to quaternary structure, the Tat system comprises two distinct complexes: a TatABC complex, containing multiple copies of TatA, TatB and TatC subunits, and a separate TatA complex, containing only TatA subunits. Substrates initially bind to the TatABC complex, which probably triggers association of the separate TatA complex to form the active translocon.

The protein localises to the cell inner membrane. Part of the twin-arginine translocation (Tat) system that transports large folded proteins containing a characteristic twin-arginine motif in their signal peptide across membranes. TatA could form the protein-conducting channel of the Tat system. In Yersinia pestis, this protein is Sec-independent protein translocase protein TatA.